The chain runs to 205 residues: High frequency lysogenization protein HflD homolog (205 aa).

It belongs to the HflD family.

It localises to the cytoplasm. The protein localises to the cell inner membrane. In Vibrio atlanticus (strain LGP32) (Vibrio splendidus (strain Mel32)), this protein is High frequency lysogenization protein HflD homolog.